We begin with the raw amino-acid sequence, 608 residues long: ATP-binding protein Uup (608 aa).

2 consecutive ABC transporter domains span residues 7–217 (APVL…AADA) and 285–512 (VEAK…FAPV). ATP is bound by residues 42–49 (GRNGAGKS) and 317–324 (GPNGAGKT). The interval 522–608 (AAPAAPKKSA…LEEKKENLAG (87 aa)) is C-terminal domain (CTD), binds DNA.

Belongs to the ABC transporter superfamily. ABCF family. Uup subfamily.

The protein resides in the cytoplasm. The enzyme catalyses ATP + H2O = ADP + phosphate + H(+). Functionally, probably plays a role in ribosome assembly or function. May be involved in resolution of branched DNA intermediates that result from template switching in postreplication gaps. Binds DNA and has ATPase activity. Its function is as follows. One of a cluster of genes involved in attachment of the holdfast to the cell. The holdfast is a structure that allows the bacteria to firmly adhere to surfaces. This is ATP-binding protein Uup from Caulobacter vibrioides (strain ATCC 19089 / CIP 103742 / CB 15) (Caulobacter crescentus).